Reading from the N-terminus, the 116-residue chain is Holo-[acyl-carrier-protein] synthase (116 aa).

The Mg(2+) site is built by aspartate 5 and glutamate 50.

It belongs to the P-Pant transferase superfamily. AcpS family. Requires Mg(2+) as cofactor.

The protein resides in the cytoplasm. It catalyses the reaction apo-[ACP] + CoA = holo-[ACP] + adenosine 3',5'-bisphosphate + H(+). In terms of biological role, transfers the 4'-phosphopantetheine moiety from coenzyme A to a Ser of acyl-carrier-protein. In Nitratiruptor sp. (strain SB155-2), this protein is Holo-[acyl-carrier-protein] synthase.